A 236-amino-acid chain; its full sequence is Pyridoxine 5'-phosphate synthase (236 aa).

Asn6 is a 3-amino-2-oxopropyl phosphate binding site. Residue 8-9 participates in 1-deoxy-D-xylulose 5-phosphate binding; that stretch reads DH. 3-amino-2-oxopropyl phosphate is bound at residue Arg17. His42 (proton acceptor) is an active-site residue. 1-deoxy-D-xylulose 5-phosphate contacts are provided by Arg44 and His49. Glu69 functions as the Proton acceptor in the catalytic mechanism. 1-deoxy-D-xylulose 5-phosphate is bound at residue Thr99. His190 serves as the catalytic Proton donor. Residues Gly191 and 212 to 213 contribute to the 3-amino-2-oxopropyl phosphate site; that span reads GH.

This sequence belongs to the PNP synthase family. As to quaternary structure, homooctamer; tetramer of dimers.

Its subcellular location is the cytoplasm. It carries out the reaction 3-amino-2-oxopropyl phosphate + 1-deoxy-D-xylulose 5-phosphate = pyridoxine 5'-phosphate + phosphate + 2 H2O + H(+). Its pathway is cofactor biosynthesis; pyridoxine 5'-phosphate biosynthesis; pyridoxine 5'-phosphate from D-erythrose 4-phosphate: step 5/5. Catalyzes the complicated ring closure reaction between the two acyclic compounds 1-deoxy-D-xylulose-5-phosphate (DXP) and 3-amino-2-oxopropyl phosphate (1-amino-acetone-3-phosphate or AAP) to form pyridoxine 5'-phosphate (PNP) and inorganic phosphate. In Chlorobium phaeobacteroides (strain DSM 266 / SMG 266 / 2430), this protein is Pyridoxine 5'-phosphate synthase.